The following is a 245-amino-acid chain: 1-(5-phosphoribosyl)-5-[(5-phosphoribosylamino)methylideneamino] imidazole-4-carboxamide isomerase (245 aa).

Residue aspartate 7 is the Proton acceptor of the active site. Catalysis depends on aspartate 129, which acts as the Proton donor.

This sequence belongs to the HisA/HisF family.

It is found in the cytoplasm. The catalysed reaction is 1-(5-phospho-beta-D-ribosyl)-5-[(5-phospho-beta-D-ribosylamino)methylideneamino]imidazole-4-carboxamide = 5-[(5-phospho-1-deoxy-D-ribulos-1-ylimino)methylamino]-1-(5-phospho-beta-D-ribosyl)imidazole-4-carboxamide. It functions in the pathway amino-acid biosynthesis; L-histidine biosynthesis; L-histidine from 5-phospho-alpha-D-ribose 1-diphosphate: step 4/9. In Shewanella amazonensis (strain ATCC BAA-1098 / SB2B), this protein is 1-(5-phosphoribosyl)-5-[(5-phosphoribosylamino)methylideneamino] imidazole-4-carboxamide isomerase.